The chain runs to 423 residues: Serine--tRNA ligase (423 aa).

231-233 lines the L-serine pocket; that stretch reads TAE. Position 262-264 (262-264) interacts with ATP; it reads RSE. Residue Glu285 participates in L-serine binding. An ATP-binding site is contributed by 349-352; sequence EISS. An L-serine-binding site is contributed by Ser384.

This sequence belongs to the class-II aminoacyl-tRNA synthetase family. Type-1 seryl-tRNA synthetase subfamily. Homodimer. The tRNA molecule binds across the dimer.

The protein resides in the cytoplasm. It carries out the reaction tRNA(Ser) + L-serine + ATP = L-seryl-tRNA(Ser) + AMP + diphosphate + H(+). The enzyme catalyses tRNA(Sec) + L-serine + ATP = L-seryl-tRNA(Sec) + AMP + diphosphate + H(+). Its pathway is aminoacyl-tRNA biosynthesis; selenocysteinyl-tRNA(Sec) biosynthesis; L-seryl-tRNA(Sec) from L-serine and tRNA(Sec): step 1/1. In terms of biological role, catalyzes the attachment of serine to tRNA(Ser). Is also able to aminoacylate tRNA(Sec) with serine, to form the misacylated tRNA L-seryl-tRNA(Sec), which will be further converted into selenocysteinyl-tRNA(Sec). The polypeptide is Serine--tRNA ligase (Lactococcus lactis subsp. lactis (strain IL1403) (Streptococcus lactis)).